A 66-amino-acid polypeptide reads, in one-letter code: LTCVTSKSIFGITTENCPDGQNLCFKKWYYIVPRYSDITWGCAATCPKPTNVRETIRCCETDKCNE.

4 cysteine pairs are disulfide-bonded: Cys-3–Cys-24, Cys-17–Cys-42, Cys-46–Cys-58, and Cys-59–Cys-64.

It belongs to the three-finger toxin family. Short-chain subfamily. Aminergic toxin sub-subfamily. As to expression, expressed by the venom gland.

The protein resides in the secreted. In terms of biological role, shows a non-competitive interaction with adrenergic and muscarinic receptors. Binds to alpha-2b (ADRA2B) (IC(50)=2.3 nM), alpha-1a (ADRA1A), alpha-1b (ADRA1B), and alpha-2c (ADRA2C) adrenergic receptors. Reversibly binds to M1 (CHRM1) muscarinic acetylcholine receptors, probably by interacting with the orthosteric site. Also reveals a slightly weaker effect at M3 (CHRM3) and M4 (CHRM4) receptors. The order of potency is ADRA2B&gt;&gt;CHRM1&gt;ADRA1A&gt;ADRA1B&gt;ADRA2C/CHRM4. This is Muscarinic toxin 1 from Dendroaspis angusticeps (Eastern green mamba).